A 354-amino-acid chain; its full sequence is Phospho-N-acetylmuramoyl-pentapeptide-transferase (354 aa).

The next 10 membrane-spanning stretches (helical) occupy residues 27–47 (ATLL…INML), 73–93 (TMGG…WMDV), 97–117 (LVWA…LDDY), 138–158 (FVVA…YVPV), 162–182 (LYVP…VGAG), 193–213 (GLAI…AYLA), 230–250 (AGEL…FLWF), 256–276 (AVFM…VIAV), 282–302 (IVLA…IVQV), and 331–351 (TVVI…LATL).

Belongs to the glycosyltransferase 4 family. MraY subfamily. Mg(2+) serves as cofactor.

Its subcellular location is the cell inner membrane. It carries out the reaction UDP-N-acetyl-alpha-D-muramoyl-L-alanyl-gamma-D-glutamyl-meso-2,6-diaminopimeloyl-D-alanyl-D-alanine + di-trans,octa-cis-undecaprenyl phosphate = di-trans,octa-cis-undecaprenyl diphospho-N-acetyl-alpha-D-muramoyl-L-alanyl-D-glutamyl-meso-2,6-diaminopimeloyl-D-alanyl-D-alanine + UMP. It functions in the pathway cell wall biogenesis; peptidoglycan biosynthesis. Catalyzes the initial step of the lipid cycle reactions in the biosynthesis of the cell wall peptidoglycan: transfers peptidoglycan precursor phospho-MurNAc-pentapeptide from UDP-MurNAc-pentapeptide onto the lipid carrier undecaprenyl phosphate, yielding undecaprenyl-pyrophosphoryl-MurNAc-pentapeptide, known as lipid I. The polypeptide is Phospho-N-acetylmuramoyl-pentapeptide-transferase (Novosphingobium aromaticivorans (strain ATCC 700278 / DSM 12444 / CCUG 56034 / CIP 105152 / NBRC 16084 / F199)).